The primary structure comprises 747 residues: MIRRWLTISKSGKKKKAVNDTITEEVEKVDFKPVNHDINDELCYSESSDNPSSSLFVSNLDTKETFLNEDNNLQISSGLDYSSETCNQGSNYSQDGIFYISNAKAINAYGGIITQGPEAPILAMKVSDSMPYGDGSNKVFGYENFGNTCYCNSVLQCLYNLSSLRENILQFPKKSRESDQPRKKEMRGKKPRIFTEASFEKSIAGTNGHLPNPKPQSVDDGKPTPVNSVNSNTAGPSEKKSKFFKSFSAKHVQDNNKKEGSPAILTTGKPSSRPQDAPPLIVETPNEPGAPSRLSFENVTDRPPDVPRKIIVGRVLNYENPSRGSSNSNNLDLKGESNSSLSTPLDKKDTRRSSSSSQISPEHRKKSALIRGPVLNIDHSLNGSDKATLYSSLRDIFECITENTYLTGVVSPSSFVDVLKRENVLFNTTMHQDAHEFFNFLLNELSEYIERENKKIAASDINSDSEPSKSKNFISDLFQGTLTNQIKCLTCDNITSRDEPFLDFPIEVQGDEETDIQEILKSYHQREMLNGSNKFYCDECCGLQEAERLVGLKQLPDTLTLHLKRFKYSEKQNCNIKLFNNIHYPLTLNVCSSINSKVCQKYELAGIVVHMGGGPQHGHYVSLCKHEKFGWLLFDDETVEAVKEETVLEFTGESPNMATAYVLFYKAMYSNAVEKNDRENMAKEQDDNIDNLIKYDDWLRTCNSGQKKKEELPIADDLDTAIDDSFVSNTPIKSSKKKSRMFSFRKS.

The USP domain maps to 140–668 (FGYENFGNTC…TAYVLFYKAM (529 aa)). The active-site Nucleophile is the C149. 2 disordered regions span residues 172 to 305 (PKKS…RPPD) and 318 to 367 (YENP…RKKS). The span at 174–183 (KSRESDQPRK) shows a compositional bias: basic and acidic residues. Residue S198 is modified to Phosphoserine. The span at 225–235 (PVNSVNSNTAG) shows a compositional bias: polar residues. Basic and acidic residues predominate over residues 251 to 260 (HVQDNNKKEG). A compositionally biased stretch (polar residues) spans 319–343 (ENPSRGSSNSNNLDLKGESNSSLST). The active-site Proton acceptor is H619.

Belongs to the peptidase C19 family.

It carries out the reaction Thiol-dependent hydrolysis of ester, thioester, amide, peptide and isopeptide bonds formed by the C-terminal Gly of ubiquitin (a 76-residue protein attached to proteins as an intracellular targeting signal).. In Saccharomyces cerevisiae (strain ATCC 204508 / S288c) (Baker's yeast), this protein is Ubiquitin carboxyl-terminal hydrolase 13 (UBP13).